The sequence spans 392 residues: Protein O-glucosyltransferase 1 (392 aa).

A signal peptide spans Met-1–Gly-23. Asn-40 and Asn-53 each carry an N-linked (GlcNAc...) asparagine glycan. 4 disulfide bridges follow: Cys-49-Cys-56, Cys-54-Cys-357, Cys-102-Cys-108, and Cys-263-Cys-286. An interaction with the consensus sequence C-X-S-X-[PA]-C in peptide substrates region spans residues Met-103–Arg-107. Asp-133 serves as the catalytic Proton donor/acceptor. An interaction with the consensus sequence C-X-S-X-[PA]-C in peptide substrates region spans residues Ala-172 to Pro-178. A UDP-alpha-D-glucose-binding site is contributed by Tyr-177. Residue Asn-204 is glycosylated (N-linked (GlcNAc...) asparagine). UDP-alpha-D-glucose-binding positions include Ser-212, Arg-218, and Val-274 to Arg-279. N-linked (GlcNAc...) asparagine glycosylation is present at Asn-373. A Prevents secretion from ER motif is present at residues Lys-389–Leu-392.

It belongs to the glycosyltransferase 90 family. Expressed in most adult tissues at different intensities. Abundantly expressed in liver. Expressed also in brain, heart, skeletal muscle, spleen, kidney, placenta, lung and peripheral blood leukocyte. Not detectable in colon, thymus and small intestine. Expressed in the epidermis, especially in the upper parts, stratum spinosum and stratum granulosum (at protein level).

It localises to the endoplasmic reticulum lumen. The catalysed reaction is L-seryl-[EGF-like domain protein] + UDP-alpha-D-xylose = 3-O-(beta-D-xylosyl)-L-seryl-[EGF-like domain protein] + UDP + H(+). It catalyses the reaction L-seryl-[EGF-like domain protein] + UDP-alpha-D-glucose = 3-O-(beta-D-glucosyl)-L-seryl-[EGF-like domain protein] + UDP + H(+). Its pathway is protein modification; protein glycosylation. In terms of biological role, dual specificity glycosyltransferase that catalyzes the transfer of glucose and xylose from UDP-glucose and UDP-xylose, respectively, to a serine residue found in the consensus sequence of C-X-S-X-P-C. Specifically targets extracellular EGF repeats of protein such as CRB2, F7, F9 and NOTCH2. Acts as a positive regulator of Notch signaling by mediating O-glucosylation of Notch, leading to regulate muscle development. Notch glucosylation does not affect Notch ligand binding. Required during early development to promote gastrulation: acts by mediating O-glucosylation of CRB2, which is required for CRB2 localization to the cell membrane. This is Protein O-glucosyltransferase 1 from Homo sapiens (Human).